Consider the following 98-residue polypeptide: NADH-ubiquinone oxidoreductase chain 4L (98 aa).

3 helical membrane-spanning segments follow: residues 2–22 (PSIS…MLMF), 29–49 (SLLC…LIIL), and 61–81 (ILLL…LVTV).

The protein belongs to the complex I subunit 4L family. In terms of assembly, core subunit of respiratory chain NADH dehydrogenase (Complex I) which is composed of 45 different subunits.

The protein resides in the mitochondrion inner membrane. It carries out the reaction a ubiquinone + NADH + 5 H(+)(in) = a ubiquinol + NAD(+) + 4 H(+)(out). Its function is as follows. Core subunit of the mitochondrial membrane respiratory chain NADH dehydrogenase (Complex I) which catalyzes electron transfer from NADH through the respiratory chain, using ubiquinone as an electron acceptor. Part of the enzyme membrane arm which is embedded in the lipid bilayer and involved in proton translocation. The sequence is that of NADH-ubiquinone oxidoreductase chain 4L (MT-ND4L) from Microcebus mamiratra (Claire's mouse lemur).